A 111-amino-acid polypeptide reads, in one-letter code: Cell cycle protein GpsB (111 aa).

Residues 34–72 (LDMIIKDYEVFHKELEQLQQQNARLKRELEEQKLAAAQA) are a coiled coil.

It belongs to the GpsB family. In terms of assembly, forms polymers through the coiled coil domains. Interacts with PBP1, MreC and EzrA.

The protein resides in the cytoplasm. Functionally, divisome component that associates with the complex late in its assembly, after the Z-ring is formed, and is dependent on DivIC and PBP2B for its recruitment to the divisome. Together with EzrA, is a key component of the system that regulates PBP1 localization during cell cycle progression. Its main role could be the removal of PBP1 from the cell pole after pole maturation is completed. Also contributes to the recruitment of PBP1 to the division complex. Not essential for septum formation. The polypeptide is Cell cycle protein GpsB (Bacillus cytotoxicus (strain DSM 22905 / CIP 110041 / 391-98 / NVH 391-98)).